The sequence spans 314 residues: Hydroxyacyl-coenzyme A dehydrogenase, mitochondrial (314 aa).

Residues 1 to 12 constitute a mitochondrion transit peptide; that stretch reads MAFVTRQFMRSV. Residues 34-39 and aspartate 57 each bind NAD(+); that span reads GGGLMG. Residues serine 73 and lysine 80 each coordinate CoA. Lysine 80 is modified (N6-succinyllysine). N6-acetyllysine; alternate is present on residues lysine 81 and lysine 87. Residues lysine 81 and lysine 87 each carry the N6-succinyllysine; alternate modification. Residue glutamate 122 participates in NAD(+) binding. Position 125 is an N6-acetyllysine (lysine 125). Lysine 127 is a binding site for NAD(+). Lysine 127 is modified (N6-(2-hydroxyisobutyryl)lysine). Lysine 136 carries the post-translational modification N6-acetyllysine; alternate. Position 136 is an N6-succinyllysine; alternate (lysine 136). Residues serine 149 and asparagine 173 each coordinate NAD(+). Serine 149 provides a ligand contact to CoA. An N6-acetyllysine modification is found at lysine 179. N6-acetyllysine; alternate is present on residues lysine 185, lysine 192, and lysine 202. An N6-succinyllysine; alternate mark is found at lysine 185, lysine 192, and lysine 202. Lysine 206 is subject to N6-succinyllysine. Lysine 212 and lysine 241 each carry N6-acetyllysine; alternate. Residues lysine 212 and lysine 241 each carry the N6-succinyllysine; alternate modification. An NAD(+)-binding site is contributed by lysine 305. Lysine 312 carries the N6-acetyllysine; alternate modification. An N6-succinyllysine; alternate modification is found at lysine 312.

The protein belongs to the 3-hydroxyacyl-CoA dehydrogenase family. Homodimer. Interacts with GLUD1; this interaction inhibits the activation of glutamate dehydrogenase 1 (GLUD1). In terms of processing, succinylation at Lys-81, adjacent to a coenzyme A binding site. Desuccinylated by SIRT5. In terms of tissue distribution, expressed in liver, kidney, pancreas, heart and skeletal muscle.

The protein localises to the mitochondrion matrix. It carries out the reaction a (3S)-3-hydroxyacyl-CoA + NAD(+) = a 3-oxoacyl-CoA + NADH + H(+). The catalysed reaction is (3S)-3-hydroxybutanoyl-CoA + NAD(+) = acetoacetyl-CoA + NADH + H(+). It catalyses the reaction (3S)-hydroxydecanoyl-CoA + NAD(+) = 3-oxodecanoyl-CoA + NADH + H(+). The enzyme catalyses (3S)-hydroxyhexadecanoyl-CoA + NAD(+) = 3-oxohexadecanoyl-CoA + NADH + H(+). It participates in lipid metabolism; fatty acid beta-oxidation. Functionally, mitochondrial fatty acid beta-oxidation enzyme that catalyzes the third step of the beta-oxidation cycle for medium and short-chain 3-hydroxy fatty acyl-CoAs (C4 to C10). Plays a role in the control of insulin secretion by inhibiting the activation of glutamate dehydrogenase 1 (GLUD1), an enzyme that has an important role in regulating amino acid-induced insulin secretion. Plays a role in the maintenance of normal spermatogenesis through the reduction of fatty acid accumulation in the testes. The polypeptide is Hydroxyacyl-coenzyme A dehydrogenase, mitochondrial (HADH) (Homo sapiens (Human)).